A 328-amino-acid chain; its full sequence is CCAAT/enhancer-binding protein beta (328 aa).

At Arg-3 the chain carries Asymmetric dimethylarginine; by CARM1. At Lys-39 the chain carries N6-methylated lysine. Residues Asp-165–Lys-274 are disordered. Positions Ser-200–Ala-231 are enriched in low complexity. Thr-220 is modified (phosphothreonine; by RPS6KA1, CDK2 and MAPK). Residues Lys-248–Asn-264 are compositionally biased toward basic and acidic residues. The 64-residue stretch at Ser-254–Leu-317 folds into the bZIP domain. Residues Lys-258–Arg-278 are basic motif. A leucine-zipper region spans residues Leu-280–Leu-287.

It belongs to the bZIP family. C/EBP subfamily. In terms of assembly, binds DNA as a dimer. Interacts (not methylated) with MED23, MED26, SMARCA2, SMARCB1 and SMARCC1. Methylated. Methylation at Arg-3 by CARM1 and at Lys-39 by EHMT2, inhibit transactivation activity. Methylation is probably inhibited by phosphorylation at Thr-220. Specifically expressed in myelomoncytic cells.

It is found in the nucleus. Its function is as follows. Important transcriptional activator regulating the expression of genes involved in immune and inflammatory responses. Binds to regulatory regions of several acute-phase and cytokines genes and probably plays a role in the regulation of acute-phase reaction, inflammation and hemopoiesis. The consensus recognition site is 5'-T[TG]NNGNAA[TG]-3'. Functions in brown adipose tissue (BAT) differentiation. Regulates the transcriptional induction of peroxisome proliferator-activated receptor gamma (PPARG). Binds to the MGF and MIM-1 promoters and activates the transcription of these genes. Important transcription factor regulating the expression of genes involved in immune and inflammatory responses. Also plays a significant role in adipogenesis, as well as in the gluconeogenic pathway, liver regeneration, and hematopoiesis. The consensus recognition site is 5'-T[TG]NNGNAA[TG]-3'. Its functional capacity is governed by protein interactions and post-translational protein modifications. In Gallus gallus (Chicken), this protein is CCAAT/enhancer-binding protein beta (CEBPB).